A 925-amino-acid polypeptide reads, in one-letter code: Protein translocase subunit SecA (925 aa).

ATP-binding positions include Gln87, 105–109 (GEGKT), and Asp515. 4 residues coordinate Zn(2+): Cys909, Cys911, Cys920, and His921.

It belongs to the SecA family. Monomer and homodimer. Part of the essential Sec protein translocation apparatus which comprises SecA, SecYEG and auxiliary proteins SecDF-YajC and YidC. Zn(2+) serves as cofactor.

It is found in the cell inner membrane. The protein localises to the cytoplasm. The enzyme catalyses ATP + H2O + cellular proteinSide 1 = ADP + phosphate + cellular proteinSide 2.. Functionally, part of the Sec protein translocase complex. Interacts with the SecYEG preprotein conducting channel. Has a central role in coupling the hydrolysis of ATP to the transfer of proteins into and across the cell membrane, serving both as a receptor for the preprotein-SecB complex and as an ATP-driven molecular motor driving the stepwise translocation of polypeptide chains across the membrane. The protein is Protein translocase subunit SecA of Cupriavidus necator (strain ATCC 17699 / DSM 428 / KCTC 22496 / NCIMB 10442 / H16 / Stanier 337) (Ralstonia eutropha).